The sequence spans 449 residues: Probable glycine dehydrogenase (decarboxylating) subunit 1 (449 aa).

The protein belongs to the GcvP family. N-terminal subunit subfamily. The glycine cleavage system is composed of four proteins: P, T, L and H. In this organism, the P 'protein' is a heterodimer of two subunits.

The enzyme catalyses N(6)-[(R)-lipoyl]-L-lysyl-[glycine-cleavage complex H protein] + glycine + H(+) = N(6)-[(R)-S(8)-aminomethyldihydrolipoyl]-L-lysyl-[glycine-cleavage complex H protein] + CO2. Functionally, the glycine cleavage system catalyzes the degradation of glycine. The P protein binds the alpha-amino group of glycine through its pyridoxal phosphate cofactor; CO(2) is released and the remaining methylamine moiety is then transferred to the lipoamide cofactor of the H protein. This chain is Probable glycine dehydrogenase (decarboxylating) subunit 1, found in Pyrococcus horikoshii (strain ATCC 700860 / DSM 12428 / JCM 9974 / NBRC 100139 / OT-3).